The following is a 746-amino-acid chain: NAD(P)H-quinone oxidoreductase subunit 5, chloroplastic (746 aa).

Transmembrane regions (helical) follow at residues 9-29, 40-60, 89-109, 125-145, 147-167, 185-205, 219-239, 258-278, 280-300, 327-347, 354-374, 396-416, 425-445, 546-566, 607-627, and 723-743; these read WMIP…LLLF, WAFL…DLSI, IDPL…LVLI, FAYM…SNLI, VYIF…FWFT, GDFG…SFEF, NQVH…GPVA, TPIS…FLVA, LLPL…IGII, LGYM…FHLI, ALLF…VGYS, TTFL…CFWS, WLYS…TAFY, ILFP…IGIP, FSVS…KPAY, and LLLY…LNLL.

The protein belongs to the complex I subunit 5 family. In terms of assembly, NDH is composed of at least 16 different subunits, 5 of which are encoded in the nucleus.

It is found in the plastid. It localises to the chloroplast thylakoid membrane. The enzyme catalyses a plastoquinone + NADH + (n+1) H(+)(in) = a plastoquinol + NAD(+) + n H(+)(out). It carries out the reaction a plastoquinone + NADPH + (n+1) H(+)(in) = a plastoquinol + NADP(+) + n H(+)(out). Its function is as follows. NDH shuttles electrons from NAD(P)H:plastoquinone, via FMN and iron-sulfur (Fe-S) centers, to quinones in the photosynthetic chain and possibly in a chloroplast respiratory chain. The immediate electron acceptor for the enzyme in this species is believed to be plastoquinone. Couples the redox reaction to proton translocation, and thus conserves the redox energy in a proton gradient. This is NAD(P)H-quinone oxidoreductase subunit 5, chloroplastic (ndhF) from Carica papaya (Papaya).